A 531-amino-acid polypeptide reads, in one-letter code: Sop-2-related protein 3 (531 aa).

As to expression, expressed ubiquitously.

It localises to the cytoplasm. It is found in the nucleus. Its function is as follows. Probably acts synergistically with sop-2 to maintain the transcriptionally repressive state of homeotic genes in order to regulate various neurogenic identities. Specification of some neuronal identities also involves expression of non-Hox genes. Specifies dopaminergic and serotonergic neuronal cell fate, and regulates neurotransmitter choice and axon pathfinding. The sequence is that of Sop-2-related protein 3 (sor-3) from Caenorhabditis elegans.